We begin with the raw amino-acid sequence, 460 residues long: Putative arginine/ornithine antiporter (460 aa).

Topologically, residues 1–4 (MEKK) are cytoplasmic. The helical transmembrane segment at 5–25 (LGLSALTALVLSSMLGAGVFS) threads the bilayer. Topologically, residues 26–38 (LPQNMAAVASPAA) are periplasmic. Residues 39–59 (LLIGWGITGAGILLLAFAMLI) traverse the membrane as a helical segment. Topologically, residues 60-92 (LTRIRPELDGGIFTYAREGFGELIGFCSAWGYW) are cytoplasmic. Residues 93 to 113 (LCAVIANVSYLVIVFSALSFF) traverse the membrane as a helical segment. Topologically, residues 114-125 (TDTPELRLFGDG) are periplasmic. The chain crosses the membrane as a helical span at residues 126–146 (NTWQSIVGASALLWIVHFLIL). Residues 147–157 (RGVQTAASINL) lie on the Cytoplasmic side of the membrane. A helical membrane pass occupies residues 158–178 (VATLAKLLPLGLFVVLAMMMF). Topologically, residues 179–201 (KLDTFKLDFTGLALGVPVWEQVK) are periplasmic. The helical transmembrane segment at 202 to 222 (NTMLITLWVFIGVEGAVVVSA) threads the bilayer. At 223 to 235 (RARNKRDVGKATL) the chain is on the cytoplasmic side. A helical transmembrane segment spans residues 236–256 (LAVLSALGVYLLVTLLSLGVV). Over 257–282 (ARPELAEIRNPSMAGLMVEMMGPWGE) the chain is Periplasmic. Residues 283–303 (IIIAAGLIVSVCGAYLSWTIM) form a helical membrane-spanning segment. Topologically, residues 304-331 (AAEVPFLAATHKAFPRIFARQNAQAAPS) are cytoplasmic. The helical transmembrane segment at 332–352 (ASLWLTNICVQICLVLIWLTG) threads the bilayer. At 353–357 (SDYNT) the chain is on the periplasmic side. Residues 358–378 (LLTIASEMILVPYFLVGAFLL) traverse the membrane as a helical segment. The Cytoplasmic portion of the chain corresponds to 379 to 384 (KIATRP). 2 helical membrane-spanning segments follow: residues 385–405 (LHKAVGVGACIYGLWLLYASG) and 406–426 (PMHLLLSVVLYAPGLLVFLYA). Residues 427–439 (RKTHTHDNVLNRQ) are Cytoplasmic-facing. Residues 440–460 (EMVLIGMLLIASVPATWMLVG) traverse the membrane as a helical segment.

Belongs to the amino acid-polyamine-organocation (APC) superfamily. Basic amino acid/polyamine antiporter (APA) (TC 2.A.3.2) family.

The protein localises to the cell inner membrane. The catalysed reaction is L-ornithine(in) + L-arginine(out) = L-ornithine(out) + L-arginine(in). Functionally, catalyzes electroneutral exchange between arginine and ornithine to allow high-efficiency energy conversion in the arginine deiminase pathway. This chain is Putative arginine/ornithine antiporter (ydgI), found in Escherichia coli O6:H1 (strain CFT073 / ATCC 700928 / UPEC).